A 634-amino-acid chain; its full sequence is UPF0329 protein ECU11_2090 (634 aa).

2 stretches are compositionally biased toward basic and acidic residues: residues 354-365 and 397-407; these read REEREKREESKG and GESKEEDRGEE. The segment at 354–438 is disordered; that stretch reads REEREKREES…KGSGEKRISE (85 aa). The segment covering 408-417 has biased composition (acidic residues); sequence GGVEAEDPLE.

Belongs to the UPF0329 family.

In Encephalitozoon cuniculi (strain GB-M1) (Microsporidian parasite), this protein is UPF0329 protein ECU11_2090.